A 535-amino-acid chain; its full sequence is T-complex protein 1 subunit beta (535 aa).

Position 1 is an N-acetylmethionine (Met-1). Residue Ala-2 is modified to N-acetylalanine. A Phosphoserine modification is found at Ser-3. An N6-acetyllysine modification is found at Lys-13. ADP is bound at residue Gly-44. Residue Gly-44 participates in ATP binding. Ser-60 is modified (phosphoserine). Mg(2+) is bound at residue Asp-97. Positions 98, 99, 100, and 101 each coordinate ADP. ATP contacts are provided by Gly-98, Thr-99, and Thr-100. N6-acetyllysine is present on Lys-154. ADP-binding residues include Ser-168 and Ser-169. An N6-acetyllysine modification is found at Lys-181. Residue Lys-248 forms a Glycyl lysine isopeptide (Lys-Gly) (interchain with G-Cter in SUMO2) linkage. Phosphoserine is present on Ser-260. The residue at position 261 (Thr-261) is a Phosphothreonine. The ADP site is built by Gly-410, Glu-495, and Lys-500. The ATP site is built by Glu-495 and Lys-500.

It belongs to the TCP-1 chaperonin family. Component of the chaperonin-containing T-complex (TRiC), a hexadecamer composed of two identical back-to-back stacked rings enclosing a protein folding chamber. Each ring is made up of eight different subunits: TCP1/CCT1, CCT2, CCT3, CCT4, CCT5, CCT6A/CCT6, CCT7, CCT8. Interacts with PACRG. Interacts with FLCN. Interacts with DLEC1. Interacts with SVEP1.

The protein resides in the cytoplasm. It carries out the reaction ATP + H2O = ADP + phosphate + H(+). Functionally, component of the chaperonin-containing T-complex (TRiC), a molecular chaperone complex that assists the folding of actin, tubulin and other proteins upon ATP hydrolysis. The TRiC complex mediates the folding of WRAP53/TCAB1, thereby regulating telomere maintenance. As part of the TRiC complex may play a role in the assembly of BBSome, a complex involved in ciliogenesis regulating transports vesicles to the cilia. The chain is T-complex protein 1 subunit beta from Homo sapiens (Human).